A 551-amino-acid polypeptide reads, in one-letter code: Putative transport protein CGSHiGG_02670 (551 aa).

5 helical membrane passes run 4 to 24, 28 to 48, 65 to 85, 95 to 115, and 157 to 177; these read IAITISLLALVAVIGLWIGHW, GVGLGIGGVLFGGIIVAHFTN, FGLILFVYTIGIQVGPGFFSS, AFAILIIVLGSIAVVLVHKIA, and VSYAMAYPFGICGILLAMWLI. RCK C-terminal domains are found at residues 191 to 275 and 277 to 360; these read RFNA…IIGH and VDAP…VIGN. 6 helical membrane passes run 370–390, 402–424, 438–458, 463–483, 492–512, and 529–549; these read MLPVFIGIGLGVLVGSIPFYI, AGGPLVVALILARIGTIGKLYWF, IVLFLAVVGLKSGGSFFDTLV, LEWMGYGIFITFVPLIIVGTI, YLTICGLLAGSMTDPPALAFA, and VYPLVMFLRIMSPQLLAVLLW.

It belongs to the AAE transporter (TC 2.A.81) family. YidE subfamily.

Its subcellular location is the cell membrane. This Haemophilus influenzae (strain PittGG) protein is Putative transport protein CGSHiGG_02670.